The primary structure comprises 357 residues: Set1 complex component swd2 (357 aa).

WD repeat units follow at residues 24-65, 110-149, 199-241, and 247-289; these read NFVG…KSLA, GHKQ…CQGL, PPHV…RVPS, and TQDG…QTVN.

Belongs to the WD repeat SWD2 family. In terms of assembly, component of the Set1 complex composed of ash2, sdc1, set1, shg1, spp1, swd1, swd2 and swd3.

It is found in the nucleus. The Set1 complex specifically methylates 'Lys-4' of histone H3. The sequence is that of Set1 complex component swd2 from Schizosaccharomyces pombe (strain 972 / ATCC 24843) (Fission yeast).